We begin with the raw amino-acid sequence, 184 residues long: Flavin prenyltransferase UbiX (184 aa).

FMN contacts are provided by residues 9 to 11 (GAS), S34, 85 to 88 (SMKT), and R120. The dimethylallyl phosphate site is built by Y150 and R166.

It belongs to the UbiX/PAD1 family.

It carries out the reaction dimethylallyl phosphate + FMNH2 = prenylated FMNH2 + phosphate. In terms of biological role, flavin prenyltransferase that catalyzes the synthesis of the prenylated FMN cofactor (prenyl-FMN) for 4-hydroxy-3-polyprenylbenzoic acid decarboxylase UbiD. The prenyltransferase is metal-independent and links a dimethylallyl moiety from dimethylallyl monophosphate (DMAP) to the flavin N5 and C6 atoms of FMN. In Methanocaldococcus jannaschii (strain ATCC 43067 / DSM 2661 / JAL-1 / JCM 10045 / NBRC 100440) (Methanococcus jannaschii), this protein is Flavin prenyltransferase UbiX.